The sequence spans 263 residues: uncharacterized protein (263 aa).

Residues 12-247 (LETQNLAIGY…ENLAKIYRTS (236 aa)) form the ABC transporter domain. 44–51 (GANGAGKS) contributes to the ATP binding site.

It belongs to the ABC transporter superfamily.

This is an uncharacterized protein from Haemophilus influenzae (strain ATCC 51907 / DSM 11121 / KW20 / Rd).